The sequence spans 1130 residues: Roquin-1 (1130 aa).

Residues C14, C17, C33, H35, C38, C50, and D53 each coordinate Zn(2+). The segment at 14-54 (CPICTQTFDETIRKPISLGCGHTVCKMCLNKLHRKACPFDQ) adopts an RING-type; degenerate zinc-finger fold. Residues 128–176 (VLSRPMQRKLVTLVHCQLVEEEGRIRAMRAARSLGERTVTELILQHQNP) form an HEPN-N region. The tract at residues 177-326 (QQLSSNLWAA…MQSIIDKLQT (150 aa)) is ROQ. Residues 327 to 399 (PASFAQSVQE…GLVDYIQNHS (73 aa)) are HEPN-C. Residues 413–441 (KYKTYMCRDMKQRGGCPRGASCTFAHSQE) form a C3H1-type zinc finger. S462 bears the Phosphoserine mark. Disordered regions lie at residues 493-567 (LPNG…DLPP) and 722-750 (PHPA…PSLD). The segment covering 497-506 (IASSGSTVTQ) has biased composition (polar residues). A phosphoserine mark is found at S531 and S535. Composition is skewed to pro residues over residues 553 to 567 (NPHP…DLPP) and 732 to 746 (PRDP…PQPH). 3 positions are modified to phosphoserine: S861, S1107, and S1110. The interval 1100–1130 (KTSSLNLSEDSEGGGDNNDSQRSGVVSNSAP) is disordered. A compositionally biased stretch (polar residues) spans 1116–1130 (NNDSQRSGVVSNSAP).

In terms of assembly, interacts with DDX6 and EDC4. Interacts with CCR4-NOT deadenylase complex. Interacts with RC3H1; the interaction is RNA independent. Post-translationally, proteolytically cleaved after Arg-510 and Arg-579 by MALT1 in activated CD4(+) T cells; cleavage at Arg-510 and Arg-579 is critical for promoting RC3H1 degradation in response to T-cell receptor (TCR) stimulation, and hence is necessary for prolonging the stability of a set of mRNAs controlling Th17 cell differentiation. As to expression, widely expressed, with highest levels in lymph node and thymus and slightly lesser amounts in brain, lung, and spleen (at protein level). Very weak expression in heart, muscle, and kidney (at protein level). Expressed in CD4(+) helper T-cells (at protein level).

Its subcellular location is the cytoplasm. It localises to the P-body. The protein resides in the cytoplasmic granule. The catalysed reaction is S-ubiquitinyl-[E2 ubiquitin-conjugating enzyme]-L-cysteine + [acceptor protein]-L-lysine = [E2 ubiquitin-conjugating enzyme]-L-cysteine + N(6)-ubiquitinyl-[acceptor protein]-L-lysine.. The protein operates within protein modification; protein ubiquitination. Its function is as follows. Post-transcriptional repressor of mRNAs containing a conserved stem loop motif, called constitutive decay element (CDE), which is often located in the 3'-UTR, as in HMGXB3, ICOS, IER3, NFKBID, NFKBIZ, PPP1R10, TNF, TNFRSF4 and in many more mRNAs. Cleaves translationally inactive mRNAs harboring a stem-loop (SL), often located in their 3'-UTRs, during the early phase of inflammation in a helicase UPF1-independent manner. Binds to CDE and promotes mRNA deadenylation and degradation. This process does not involve miRNAs. In follicular helper T (Tfh) cells, represses of ICOS and TNFRSF4/Ox40 expression, thus preventing spontaneous Tfh cell differentiation, germinal center B-cell differentiation in the absence of immunization and autoimmunity. In resting or LPS-stimulated macrophages, controls inflammation by suppressing TNF expression. Also recognizes CDE in its own mRNA and in that of paralogous RC3H2, possibly leading to feedback loop regulation. Inhibits cooperatively with ZC3H12A the differentiation of helper T cells Th17 in lungs. They repress target mRNA encoding the Th17 cell-promoting factors IL6, ICOS, REL, IRF4, NFKBID and NFKBIZ. The cooperation requires RNA-binding by RC3H1 and the nuclease activity of ZC3H12A. Recognizes and binds mRNAs containing a hexaloop stem-loop motif, called alternative decay element (ADE). Together with ZC3H12A, destabilizes TNFRSF4/OX40 mRNA by binding to the conserved stem loop structure in its 3'UTR. Able to interact with double-stranded RNA. miRNA-binding protein that regulates microRNA homeostasis. Enhances DICER-mediated processing of pre-MIR146a but reduces mature MIR146a levels through an increase of 3' end uridylation. Both inhibits ICOS mRNA expression and they may act together to exert the suppression. Acts as a ubiquitin E3 ligase. Pairs with E2 enzymes UBE2A, UBE2B, UBE2D2, UBE2F, UBE2G1, UBE2G2 and UBE2L3 and produces polyubiquitin chains. Shows the strongest activity when paired with UBE2N:UBE2V1 or UBE2N:UBE2V2 E2 complexes and generate both short and long polyubiquitin chains. The chain is Roquin-1 from Mus musculus (Mouse).